Here is a 116-residue protein sequence, read N- to C-terminus: Large ribosomal subunit protein bL17 (116 aa).

The protein belongs to the bacterial ribosomal protein bL17 family. In terms of assembly, part of the 50S ribosomal subunit. Contacts protein L32.

In Dictyoglomus turgidum (strain DSM 6724 / Z-1310), this protein is Large ribosomal subunit protein bL17.